We begin with the raw amino-acid sequence, 206 residues long: Probable 5-formyltetrahydrofolate cyclo-ligase (206 aa).

Residues 8-12 (KSELR) and Arg12 each bind ATP. Substrate contacts are provided by residues Val54, Glu59, and 146–150 (HGKGY). 143–151 (RCGHGKGYY) is a binding site for ATP. Mg(2+) is bound by residues Asp152 and Asp188.

This sequence belongs to the 5-formyltetrahydrofolate cyclo-ligase family. Monomer. It depends on Mg(2+) as a cofactor.

It localises to the cytoplasm. The catalysed reaction is (6S)-5-formyl-5,6,7,8-tetrahydrofolate + ATP = (6R)-5,10-methenyltetrahydrofolate + ADP + phosphate. Contributes to tetrahydrofolate metabolism. Helps regulate carbon flow through the folate-dependent one-carbon metabolic network that supplies carbon for the biosynthesis of purines, thymidine and amino acids. Catalyzes the irreversible conversion of 5-formyltetrahydrofolate (5-CHO-H(4)PteGlu) to yield 5,10-methenyltetrahydrofolate. The chain is Probable 5-formyltetrahydrofolate cyclo-ligase from Caenorhabditis elegans.